The following is a 248-amino-acid chain: Stress-related protein (248 aa).

The protein belongs to the REF/SRPP family.

The chain is Stress-related protein (SRP) from Vitis riparia (Frost grape).